The chain runs to 264 residues: Protein Saci_1508 (264 aa).

This sequence belongs to the CinA family.

The polypeptide is Protein Saci_1508 (Sulfolobus acidocaldarius (strain ATCC 33909 / DSM 639 / JCM 8929 / NBRC 15157 / NCIMB 11770)).